We begin with the raw amino-acid sequence, 876 residues long: Valine--tRNA ligase (876 aa).

The short motif at 44–54 (PNVTGKLHLGH) is the 'HIGH' region element. The 'KMSKS' region signature appears at 520–524 (KMSKS). Lysine 523 is a binding site for ATP. The stretch at 806–876 (EGLIDMDKEI…VKLRINQLKA (71 aa)) forms a coiled coil.

The protein belongs to the class-I aminoacyl-tRNA synthetase family. ValS type 1 subfamily. As to quaternary structure, monomer.

It is found in the cytoplasm. It carries out the reaction tRNA(Val) + L-valine + ATP = L-valyl-tRNA(Val) + AMP + diphosphate. Catalyzes the attachment of valine to tRNA(Val). As ValRS can inadvertently accommodate and process structurally similar amino acids such as threonine, to avoid such errors, it has a 'posttransfer' editing activity that hydrolyzes mischarged Thr-tRNA(Val) in a tRNA-dependent manner. This chain is Valine--tRNA ligase, found in Staphylococcus saprophyticus subsp. saprophyticus (strain ATCC 15305 / DSM 20229 / NCIMB 8711 / NCTC 7292 / S-41).